Consider the following 325-residue polypeptide: MSRPSSTGPSANKPCSKQPPPPQTPHAPSPAAPPAAATISAAGPGSSAVPAAAAVISGPGAGGGAGPVSPQHHELTSLFECPVCFDYVLPPILQCQAGHLVCNQCRQKLSCCPTCRGALTPSIRNLAMEKVASAVLFPCKYATTGCSLTLHHTEKPEHEDICEYRPYSCPCPGASCKWQGSLEAVMSHLMHAHKSITTLQGEDIVFLATDINLPGAVDWVMMQSCFGHHFMLVLEKQEKYEGHQQFFAIVLLIGTRKQAENFAYRLELNGNRRRLTWEATPRSIHDGVAAAIMNSDCLVFDTAIAHLFADNGNLGINVTISTCCQ.

Residues 1–15 are compositionally biased toward polar residues; sequence MSRPSSTGPSANKPC. Residues 1 to 43 form a disordered region; the sequence is MSRPSSTGPSANKPCSKQPPPPQTPHAPSPAAPPAAATISAAG. Ser-6 carries the post-translational modification Phosphoserine. A Phosphoserine; by DYRK2 modification is found at Ser-16. Residues 17–33 are compositionally biased toward pro residues; the sequence is KQPPPPQTPHAPSPAAP. A Phosphothreonine; by MAPK14 modification is found at Thr-24. Ser-29 is modified (phosphoserine; by DYRK2 and MAPK14). Positions 34-43 are enriched in low complexity; it reads PAAATISAAG. Phosphoserine; by DYRK2 is present on Ser-69. The RING-type zinc-finger motif lies at 81–116; that stretch reads CPVCFDYVLPPILQCQAGHLVCNQCRQKLSCCPTCR. Thr-120 carries the post-translational modification Phosphothreonine; by DYRK2. The interval 131-323 is SBD; sequence VASAVLFPCK…LGINVTISTC (193 aa). The segment at 134–194 adopts an SIAH-type zinc-finger fold; it reads AVLFPCKYAT…VMSHLMHAHK (61 aa). Zn(2+) contacts are provided by Cys-139, Cys-146, His-158, Cys-162, Cys-169, Cys-176, His-188, and His-193.

This sequence belongs to the SINA (Seven in absentia) family. Homodimer. Interacts with VAV1, without mediating its ubiquitin-mediated degradation. Probable component of some large E3 complex possibly composed of UBE2D1, SIAH2, CACYBP/SIP, SKP1, APC and TBL1X. Interacts with UBE2I. Interacts with UBE2E2. Interacts with PEG10, which may inhibit its activity. Interacts with PEG3 and EGLN2. Interacts with DYRK2. Interacts with SNCAIP. Interacts with NR1D1 and NR1D2. Interacts with DCC. Interacts with AXIN1. In terms of processing, phosphorylated at Thr-24 and Ser-29 by MAPK14, which mediates the degradation by the proteasome of EGLN3. Phosphorylated at Ser-29 by DYRK2; this increases the ubiquitin ligase activity and promotes degradation of EGLN3. In terms of tissue distribution, detected in brain (at protein level).

It localises to the cytoplasm. The protein localises to the nucleus. The enzyme catalyses S-ubiquitinyl-[E2 ubiquitin-conjugating enzyme]-L-cysteine + [acceptor protein]-L-lysine = [E2 ubiquitin-conjugating enzyme]-L-cysteine + N(6)-ubiquitinyl-[acceptor protein]-L-lysine.. It functions in the pathway protein modification; protein ubiquitination. Its function is as follows. E3 ubiquitin-protein ligase that mediates ubiquitination and subsequent proteasomal degradation of target proteins. E3 ubiquitin ligases accept ubiquitin from an E2 ubiquitin-conjugating enzyme in the form of a thioester and then directly transfers the ubiquitin to targeted substrates. Mediates E3 ubiquitin ligase activity either through direct binding to substrates or by functioning as the essential RING domain subunit of larger E3 complexes. Mediates ubiquitination and proteasomal degradation of DYRK2 in response to hypoxia. Promotes monoubiquitination of SNCA. Triggers the ubiquitin-mediated degradation of many substrates, including proteins involved in transcription regulation (GPS2, POU2AF1, PML, NCOR1), a cell surface receptor (DCC), an antiapoptotic protein (BAG1), and a protein involved in synaptic vesicle function in neurons (SYP). It is thereby involved in apoptosis, tumor suppression, cell cycle, transcription and signaling processes. Has some overlapping function with SIAH1. Triggers the ubiquitin-mediated degradation of TRAF2, whereas SIAH1 does not. Regulates cellular clock function via ubiquitination of circadian transcriptional repressors NR1D1 and NR1D2 leading to their proteasomal degradation. Plays an important role in mediating the rhythmic degradation/clearance of NR1D1 and NR1D2 contributing to their circadian profile of protein abundance. Mediates ubiquitination and degradation of EGLN2 and EGLN3 in response to the unfolded protein response (UPR), leading to their degradation and subsequent stabilization of ATF4. Also part of the Wnt signaling pathway in which it mediates the Wnt-induced ubiquitin-mediated proteasomal degradation of AXIN1. The chain is E3 ubiquitin-protein ligase SIAH2 (Siah2) from Rattus norvegicus (Rat).